The chain runs to 113 residues: B-type lectin plumieribetin (113 aa).

Residues 1-109 (NYLSKNDELR…STEIWNSDKN (109 aa)) form the Bulb-type lectin domain.

In terms of assembly, homotetramer. Interacts with alpha-1-beta-1 integrin (ITGA1/ITGB1). In terms of processing, not glycosylated. Not N-glycosylated and not O-glycosylated with the mostcommon O-linked glycoconjugates. Post-translationally, the N-terminus is blocked. As to expression, expressed by sting venom glands and is also found in skin mucus. Not found in other tissues tested.

Its subcellular location is the secreted. Its function is as follows. May contribute to some of the local and systemic effects of envenomation by the scorpionfish. Preferentially recognizes mannose-containing carbohydrate structures, but its interaction with single mannose residues is weak. Potently inhibits alpha-1-beta-1 integrin (ITGA1/ITGB1) binding to basement membrane collagen IV in a divalent cation-independent manner. In addition, moderately inhibits both laminin binding integrins alpha-3-beta-1 (ITGA3/ITGB1) and alpha-7-beta-1 (ITGA7/ITGB1). Weakens the cell-collagen contacts, reduces cell spreading, and alters the actin cytoskeleton, after the compensating alpha-2-beta-1 integrin is blocked. On the cellular level, fails to completely detach hepatocarcinoma HepG2 cells and primary arterial smooth muscle cells from the collagen IV fragment CB3. The sequence is that of B-type lectin plumieribetin from Scorpaena plumieri (Spotted scorpionfish).